A 347-amino-acid polypeptide reads, in one-letter code: Phosphoribosylformylglycinamidine cyclo-ligase (347 aa).

The protein belongs to the AIR synthase family.

It localises to the cytoplasm. It carries out the reaction 2-formamido-N(1)-(5-O-phospho-beta-D-ribosyl)acetamidine + ATP = 5-amino-1-(5-phospho-beta-D-ribosyl)imidazole + ADP + phosphate + H(+). It participates in purine metabolism; IMP biosynthesis via de novo pathway; 5-amino-1-(5-phospho-D-ribosyl)imidazole from N(2)-formyl-N(1)-(5-phospho-D-ribosyl)glycinamide: step 2/2. In Syntrophus aciditrophicus (strain SB), this protein is Phosphoribosylformylglycinamidine cyclo-ligase.